The primary structure comprises 488 residues: Cytochrome P450 71A24 (488 aa).

Residues 3–23 (MMMMIILLLCSIILITILFFK) form a helical membrane-spanning segment. C433 contributes to the heme binding site.

It belongs to the cytochrome P450 family. Heme serves as cofactor.

Its subcellular location is the membrane. This chain is Cytochrome P450 71A24 (CYP71A24), found in Arabidopsis thaliana (Mouse-ear cress).